The sequence spans 48 residues: Large ribosomal subunit protein bL32 (48 aa).

Residues 1–20 show a composition bias toward basic residues; that stretch reads MAVPKRRVSKTRAAKRRTHY. A disordered region spans residues 1–48; that stretch reads MAVPKRRVSKTRAAKRRTHYKVSLPIPVKDKDGSWKLPHRINTKTGEY.

This sequence belongs to the bacterial ribosomal protein bL32 family.

This is Large ribosomal subunit protein bL32 from Campylobacter hominis (strain ATCC BAA-381 / DSM 21671 / CCUG 45161 / LMG 19568 / NCTC 13146 / CH001A).